A 337-amino-acid chain; its full sequence is Putative high mobility group B protein 11 (337 aa).

One can recognise an ARID domain in the interval 34–125 (VRNPELFWEM…MLFEFEHLYY (92 aa)). Disordered stretches follow at residues 197–221 (TKRG…QRTG) and 298–337 (AGTS…EVSQ). The HMG box DNA-binding region spans 215-282 (PKRQRTGYNF…RYKMEILQYR (68 aa)). The segment covering 319–329 (TDACTSASSAA) has biased composition (low complexity).

Belongs to the HMGB family.

It localises to the nucleus. Its function is as follows. Binds preferentially DNA with A/T-rich content. This chain is Putative high mobility group B protein 11 (HMGB11), found in Arabidopsis thaliana (Mouse-ear cress).